A 692-amino-acid polypeptide reads, in one-letter code: Highly divergent homeobox (692 aa).

Positions 3 to 63 (LRSVFTVEQQ…NKRRKMSSKS (61 aa)) form a DNA-binding region, homeobox 1. Over residues 117 to 133 (SSSSKQGTTKHTNTQIT) the composition is skewed to polar residues. A disordered region spans residues 117 to 136 (SSSSKQGTTKHTNTQITEAH). Residues K137, K142, K146, K165, K174, K196, K214, K223, and K234 each participate in a glycyl lysine isopeptide (Lys-Gly) (interchain with G-Cter in SUMO2) cross-link. Positions 437–500 (ALQDRTQFSD…NRRRKYRLMG (64 aa)) form a DNA-binding region, homeobox 2. Disordered stretches follow at residues 505 to 541 (PPRG…DNDR) and 647 to 692 (KDQQ…SDSL). Over residues 676-692 (TSLSVSSLSEKNASDSL) the composition is skewed to polar residues.

The protein resides in the nucleus. The polypeptide is Highly divergent homeobox (Hdx) (Mus musculus (Mouse)).